A 201-amino-acid polypeptide reads, in one-letter code: Small ribosomal subunit protein uS4c (201 aa).

Residues 15 to 43 are disordered; it reads LGALPGLTSKRPSPGSDLRNQSRSGKRSQ. One can recognise an S4 RNA-binding domain in the interval 89–150; sequence MRLDNILFRL…EQRSRALIQK (62 aa).

It belongs to the universal ribosomal protein uS4 family. As to quaternary structure, part of the 30S ribosomal subunit. Contacts protein S5. The interaction surface between S4 and S5 is involved in control of translational fidelity.

Its subcellular location is the plastid. It is found in the chloroplast. One of the primary rRNA binding proteins, it binds directly to 16S rRNA where it nucleates assembly of the body of the 30S subunit. Functionally, with S5 and S12 plays an important role in translational accuracy. The polypeptide is Small ribosomal subunit protein uS4c (rps4) (Ceratophyllum demersum (Rigid hornwort)).